Consider the following 417-residue polypeptide: Voltage-gated potassium channel Kch (417 aa).

At 1-21 (MSHWATFKQTATNLWVTLRHD) the chain is on the cytoplasmic side. The chain crosses the membrane as a helical span at residues 22–41 (ILALAVFLNGLLIFKTIYGM). Over 42–63 (SVNLLDIFHIKAFSELDLSLLA) the chain is Periplasmic. A helical transmembrane segment spans residues 64–83 (NAPLFMLGVFLVLNSIGLLF). The Cytoplasmic segment spans residues 84-86 (RAK). A helical transmembrane segment spans residues 87–104 (LAWAISIILLLIALIYTL). At 105-110 (HFYPWL) the chain is on the periplasmic side. A helical membrane pass occupies residues 111-127 (KFSIGFCIFTLVFLLIL). The Cytoplasmic portion of the chain corresponds to 128–140 (RKDFSHSSAAAGT). The chain crosses the membrane as a helical span at residues 141-160 (IFAFISFTTLLFYSTYGALY). Residues 161 to 199 (LSEGFNPRIESLMTAFYFSIETMSTVGYGDIVPVSESAR) are Periplasmic-facing. The Selectivity filter signature appears at 185 to 190 (TVGYGD). The helical transmembrane segment at 200 to 220 (LFTISVIISGITVFATSMTSI) threads the bilayer. Topologically, residues 221-417 (FGPLIRGGFN…KADSKESAQK (197 aa)) are cytoplasmic. One can recognise an RCK N-terminal domain in the interval 243-363 (KDHFIVCGHS…IKMVHPDIIL (121 aa)).

It belongs to the potassium channel family. Dimer.

It localises to the cell inner membrane. Functionally, k(+)-specific ion channel. May play a role in the defense against osmotic shock. The chain is Voltage-gated potassium channel Kch (kch) from Escherichia coli (strain K12).